The following is a 284-amino-acid chain: uncharacterized protein (284 aa).

Positions 25-123 (PILVMHGGHS…NTLTLQSAVT (99 aa)) constitute an AB hydrolase-1 domain. The active site involves Ser-96.

Belongs to the AB hydrolase superfamily.

This is an uncharacterized protein from Bacillus subtilis (strain 168).